We begin with the raw amino-acid sequence, 542 residues long: CTP synthase (542 aa).

Residues 1-265 are amidoligase domain; that stretch reads MARYVFITGG…DSEVLSAFGI (265 aa). S13 is a binding site for CTP. S13 provides a ligand contact to UTP. Residue 14–19 participates in ATP binding; that stretch reads SLGKGI. Y54 lines the L-glutamine pocket. An ATP-binding site is contributed by D71. Residues D71 and E139 each contribute to the Mg(2+) site. Residues 146–148, 186–191, and K222 contribute to the CTP site; these read DIE and KTKPTQ. UTP-binding positions include 186–191 and K222; that span reads KTKPTQ. The Glutamine amidotransferase type-1 domain occupies 291-541; that stretch reads TIAVVGKYTG…IEAAIEQSRL (251 aa). G353 is an L-glutamine binding site. C380 acts as the Nucleophile; for glutamine hydrolysis in catalysis. L-glutamine contacts are provided by residues 381–384, E404, and R469; that span reads FGMQ. Catalysis depends on residues H514 and E516.

It belongs to the CTP synthase family. As to quaternary structure, homotetramer.

It carries out the reaction UTP + L-glutamine + ATP + H2O = CTP + L-glutamate + ADP + phosphate + 2 H(+). It catalyses the reaction L-glutamine + H2O = L-glutamate + NH4(+). The enzyme catalyses UTP + NH4(+) + ATP = CTP + ADP + phosphate + 2 H(+). The protein operates within pyrimidine metabolism; CTP biosynthesis via de novo pathway; CTP from UDP: step 2/2. Allosterically activated by GTP, when glutamine is the substrate; GTP has no effect on the reaction when ammonia is the substrate. The allosteric effector GTP functions by stabilizing the protein conformation that binds the tetrahedral intermediate(s) formed during glutamine hydrolysis. Inhibited by the product CTP, via allosteric rather than competitive inhibition. In terms of biological role, catalyzes the ATP-dependent amination of UTP to CTP with either L-glutamine or ammonia as the source of nitrogen. Regulates intracellular CTP levels through interactions with the four ribonucleotide triphosphates. The sequence is that of CTP synthase from Brucella suis (strain ATCC 23445 / NCTC 10510).